Here is a 475-residue protein sequence, read N- to C-terminus: 3-isopropylmalate dehydratase large subunit (475 aa).

[4Fe-4S] cluster-binding residues include C353, C414, and C417.

This sequence belongs to the aconitase/IPM isomerase family. LeuC type 1 subfamily. In terms of assembly, heterodimer of LeuC and LeuD. The cofactor is [4Fe-4S] cluster.

It catalyses the reaction (2R,3S)-3-isopropylmalate = (2S)-2-isopropylmalate. Its pathway is amino-acid biosynthesis; L-leucine biosynthesis; L-leucine from 3-methyl-2-oxobutanoate: step 2/4. Its function is as follows. Catalyzes the isomerization between 2-isopropylmalate and 3-isopropylmalate, via the formation of 2-isopropylmaleate. This chain is 3-isopropylmalate dehydratase large subunit, found in Ectopseudomonas mendocina (strain ymp) (Pseudomonas mendocina).